A 24-amino-acid chain; its full sequence is Unknown protein 3 (24 aa).

The chain is Unknown protein 3 from Pseudotsuga menziesii (Douglas-fir).